The sequence spans 295 residues: Protease HtpX (295 aa).

Helical transmembrane passes span 4–24 (ILLFLATNLAVVLIASITLSL) and 42–62 (QLLVFCAVFGFAGSLFSLFIS). A Zn(2+)-binding site is contributed by His147. Glu148 is a catalytic residue. His151 serves as a coordination point for Zn(2+). 2 helical membrane passes run 158–178 (VTLALVQGVVNTFVMFFARII) and 195–215 (IAYFVATIFAEVVLGFLASAI). Glu224 is a Zn(2+) binding site.

It belongs to the peptidase M48B family. The cofactor is Zn(2+).

The protein resides in the cell inner membrane. This is Protease HtpX from Pseudomonas fluorescens (strain SBW25).